The sequence spans 331 residues: Centriolar satellite-associated tubulin polyglutamylase complex regulator 1 (331 aa).

The required for interaction with PCM1 stretch occupies residues 1–111 (MLSPERLALP…HCLLQLLCPD (111 aa)). Residues 1–225 (MLSPERLALP…SCPPPALVKE (225 aa)) are required for interaction with TPGS1, LRRC49, and TTLL1. The required for interaction with TPGS2 stretch occupies residues 112–331 (FPLELTQKAA…STEETDESET (220 aa)). The disordered stretch occupies residues 292 to 331 (SCLPSRTPPRVGSPWKPLHRSRKLDAESDGSTEETDESET). Over residues 318-331 (ESDGSTEETDESET) the composition is skewed to acidic residues. Ser-319 carries the post-translational modification Phosphoserine.

The protein belongs to the CSTPP1 family. As to quaternary structure, interacts with PCM1. Interacts with TTLL1, TPGS1, TPGS2 and LRRC49; the interactions link CSTPP1 to the complex TPGC. Binds to alpha-tubulin.

The protein resides in the cytoplasm. The protein localises to the cytoskeleton. Its subcellular location is the microtubule organizing center. It is found in the centrosome. It localises to the centriolar satellite. In terms of biological role, regulator of the tubulin polyglutamylase complex (TPGC) that controls cytoskeletal organization, nuclear shape, and cilium disassembly by balancing microtubule and actin assembly. Regulates the assembly and stability of the TPGC and thereby modulates polyglutamylation of the microtubule, which antagonizes MAP4 binding. The sequence is that of Centriolar satellite-associated tubulin polyglutamylase complex regulator 1 (Cstpp1) from Rattus norvegicus (Rat).